The sequence spans 449 residues: Probable glycine dehydrogenase (decarboxylating) subunit 1 (449 aa).

This sequence belongs to the GcvP family. N-terminal subunit subfamily. In terms of assembly, the glycine cleavage system is composed of four proteins: P, T, L and H. In this organism, the P 'protein' is a heterodimer of two subunits.

It carries out the reaction N(6)-[(R)-lipoyl]-L-lysyl-[glycine-cleavage complex H protein] + glycine + H(+) = N(6)-[(R)-S(8)-aminomethyldihydrolipoyl]-L-lysyl-[glycine-cleavage complex H protein] + CO2. Its function is as follows. The glycine cleavage system catalyzes the degradation of glycine. The P protein binds the alpha-amino group of glycine through its pyridoxal phosphate cofactor; CO(2) is released and the remaining methylamine moiety is then transferred to the lipoamide cofactor of the H protein. This is Probable glycine dehydrogenase (decarboxylating) subunit 1 from Oceanobacillus iheyensis (strain DSM 14371 / CIP 107618 / JCM 11309 / KCTC 3954 / HTE831).